The primary structure comprises 558 residues: Phosphatidylserine lipase ABHD16A (558 aa).

2 consecutive transmembrane segments (helical) span residues 60-80 (ILAL…FAFF) and 93-113 (VVPF…VACL). The Cytoplasmic portion of the chain corresponds to 114 to 558 (RGIGRWTNPQ…AQHFQMPWHL (445 aa)). Residues 281-406 (LVICCEGNAG…ALVTRTVRQH (126 aa)) form the AB hydrolase-1 domain. Active-site charge relay system residues include serine 355, aspartate 430, and histidine 507.

This sequence belongs to the AB hydrolase superfamily. ABHD16 family.

Its subcellular location is the membrane. It carries out the reaction 1-heptadecanoyl-2-(5Z,8Z,11Z,14Z-eicosatetraenoyl)-sn-glycero-3-phosphoserine + H2O = 1-heptadecanoyl-sn-glycero-3-phosphoserine + (5Z,8Z,11Z,14Z)-eicosatetraenoate + H(+). It catalyses the reaction 1-hexadecanoyl-2-(9Z-octadecenoyl)-sn-glycero-3-phospho-L-serine + H2O = 1-hexadecanoyl-sn-glycero-3-phospho-L-serine + (9Z)-octadecenoate + H(+). The catalysed reaction is 1-octadecanoyl-2-(9Z,12Z-octadecadienoyl)-sn-glycero-3-phosphoserine + H2O = 1-octadecanoyl-sn-glycero-3-phosphoserine + (9Z,12Z)-octadecadienoate + H(+). The enzyme catalyses 1-heptadecanoyl-2-(5Z,8Z,11Z,14Z-eicosatetraenoyl)-sn-glycero-3-phosphocholine + H2O = 1-heptadecanoyl-sn-glycero-3-phosphocholine + (5Z,8Z,11Z,14Z)-eicosatetraenoate + H(+). It carries out the reaction 1-hexadecanoyl-2-(9Z-octadecenoyl)-sn-glycero-3-phosphoglycerol + H2O = 1-hexadecanoyl-sn-glycero-3-phosphoglycerol + (9Z)-octadecenoate + H(+). It catalyses the reaction 1-hexadecanoyl-2-(9Z-octadecenoyl)-sn-glycero-3-phospho-(1D-myo-inositol) + H2O = 1-hexadecanoyl-sn-glycero-3-phospho-(1D-myo-inositol) + (9Z)-octadecenoate + H(+). The catalysed reaction is 1-heptadecanoyl-2-(5Z,8Z,11Z,14Z-eicosatetraenoyl)-sn-glycero-3-phosphoethanolamine + H2O = 1-heptadecanoyl-sn-glycero-3-phosphoethanolamine + (5Z,8Z,11Z,14Z)-eicosatetraenoate + H(+). The enzyme catalyses 1-hexadecanoyl-2-(9Z-octadecenoyl)-sn-glycero-3-phospho-(1'-sn-glycerol) + H2O = 1-hexadecanoyl-sn-glycero-3-phospho-(1'-sn-glycerol) + (9Z)-octadecenoate + H(+). It carries out the reaction Hydrolyzes glycerol monoesters of long-chain fatty acids.. It catalyses the reaction 1-tetradecanoylglycerol + H2O = tetradecanoate + glycerol + H(+). The catalysed reaction is 2-hexadecanoylglycerol + H2O = glycerol + hexadecanoate + H(+). The enzyme catalyses 1-(9Z-octadecenoyl)-glycerol + H2O = glycerol + (9Z)-octadecenoate + H(+). It carries out the reaction 2-(9Z-octadecenoyl)-glycerol + H2O = glycerol + (9Z)-octadecenoate + H(+). It catalyses the reaction 2-(9Z,12Z-octadecadienoyl)-glycerol + H2O = (9Z,12Z)-octadecadienoate + glycerol + H(+). The catalysed reaction is 1-(5Z,8Z,11Z,14Z-eicosatetraenoyl)-glycerol + H2O = glycerol + (5Z,8Z,11Z,14Z)-eicosatetraenoate + H(+). The enzyme catalyses 2-(5Z,8Z,11Z,14Z-eicosatetraenoyl)-glycerol + H2O = glycerol + (5Z,8Z,11Z,14Z)-eicosatetraenoate + H(+). It carries out the reaction prostaglandin D2-1-glycerol ester + H2O = prostaglandin D2 + glycerol + H(+). It catalyses the reaction 2-glyceryl-15-deoxy-Delta(12,14)-prostaglandin J2 + H2O = 15-deoxy-Delta(12,14)-prostaglandin J2 + glycerol + H(+). The catalysed reaction is 1-(9Z,12Z-octadecadienoyl)-glycerol + H2O = (9Z,12Z)-octadecadienoate + glycerol + H(+). With respect to regulation, specifically inhibited by alpha-alkylidene-beta-lactone KC01 ((Z)-6-(2-Oxo-4-tridecyloxetan-3-ylidene)hexanamide). In terms of biological role, phosphatidylserine (PS) lipase that mediates the hydrolysis of phosphatidylserine to generate lysophosphatidylserine (LPS). LPS constitutes a class of signaling lipids that regulates immunological and neurological processes. Has no activity towards diacylglycerol, triacylglycerol or lysophosphatidylserine lipase. Also has monoacylglycerol lipase activity, with preference for 1-(9Z,12Z-octadecadienoyl)-glycerol (1-LG) and 2-glyceryl-15-deoxy-Delta(12,14)-prostaglandin J2 (15d-PGJ(2)-G). This is Phosphatidylserine lipase ABHD16A from Mus musculus (Mouse).